Here is a 269-residue protein sequence, read N- to C-terminus: MQAKYSSTRDMLDDDDTTISLYSGTSTVTRRAEPRHSENGTPSSVWRPVALTLLTLCLVLLVGLAALGLVFFQFYQLSNIQQDSITEKDEKLGNMSRQLQSLQAQNRKLIETLQQVAVKLCRELYNKSGGHRCSPCPEKWKWYGDKCYQFYKESKNWQSCEYFCLADNATMLKISTQEELDFAMPQSYSEFFYSYWTGLSRNGSGKAWLWTDGTPYSFELFEIIIDPTNLRNRDCMTIFNGKAYSKDCKELRRCACERIAGRVVPGELQ.

Topologically, residues 1–51 are cytoplasmic; sequence MQAKYSSTRDMLDDDDTTISLYSGTSTVTRRAEPRHSENGTPSSVWRPVAL. A helical; Signal-anchor for type II membrane protein transmembrane segment spans residues 52–72; that stretch reads TLLTLCLVLLVGLAALGLVFF. At 73–269 the chain is on the extracellular side; the sequence is QFYQLSNIQQ…AGRVVPGELQ (197 aa). N94, N126, N168, and N202 each carry an N-linked (GlcNAc...) asparagine glycan. Residues 143-257 form the C-type lectin domain; the sequence is YGDKCYQFYK…CKELRRCACE (115 aa). Intrachain disulfides connect C164-C256 and C235-C248.

It localises to the membrane. This Mus musculus (Mouse) protein is C-type lectin domain family 1 member A (Clec1a).